Reading from the N-terminus, the 225-residue chain is Orotidine 5'-phosphate decarboxylase (225 aa).

Residues D9, K31, D58–T67, T115, R176, Q184, G204, and R205 contribute to the substrate site. The Proton donor role is filled by K60.

This sequence belongs to the OMP decarboxylase family. Type 1 subfamily. Homodimer.

It catalyses the reaction orotidine 5'-phosphate + H(+) = UMP + CO2. The protein operates within pyrimidine metabolism; UMP biosynthesis via de novo pathway; UMP from orotate: step 2/2. Catalyzes the decarboxylation of orotidine 5'-monophosphate (OMP) to uridine 5'-monophosphate (UMP). In Wolbachia sp. subsp. Brugia malayi (strain TRS), this protein is Orotidine 5'-phosphate decarboxylase.